The chain runs to 352 residues: MTIAIGKAEEERGVFDIIDDWLRRDRFVFIGWSGLLLFPCAYLALGGWLTGTTFVTSWYTHGLASSYLEGCNFLTAAVSTPSNAVGHSLLFLWGLEAQGNFTRWCQLGGLWPFVALHGSFALIGFMLRQFEIAQSVRLRPYNAIAFSGPISVFVSVFLIYPLGQSGWFFAPSFGVAAIFRFILFFQGFHNWTLNPFHMMGVAGVLGAALLCAIHGATVENTLFEDGDGANTFRAFNPTQQEETYSMVTANRFWSQIFGVAFSNKRWLHFFMLFVPVTGLWMSALGVVGLALNLRAYDFVSQEIRAAEDPEFETFYTKNILLNEGIRAWMVAQDQPHEKIVFPEEVLPRGNAL.

The helical transmembrane segment at 40 to 60 (CAYLALGGWLTGTTFVTSWYT) threads the bilayer. Residue His117 coordinates chlorophyll a. Residues 124-140 (GFMLRQFEIAQSVRLRP) form a helical membrane-spanning segment. Pheophytin a contacts are provided by Gln129 and Asn142. Residues 152–165 (VFVSVFLIYPLGQS) traverse the membrane as a helical segment. His197 contributes to the chlorophyll a binding site. A helical transmembrane segment spans residues 207–227 (AALLCAIHGATVENTLFEDGD). A plastoquinone contacts are provided by His214 and Phe261. His214 lines the Fe cation pocket. Position 268 (His268) interacts with Fe cation. A helical membrane pass occupies residues 278–294 (GLWMSALGVVGLALNLR).

Belongs to the reaction center PufL/M/PsbA/D family. As to quaternary structure, PSII is composed of 1 copy each of membrane proteins PsbA, PsbB, PsbC, PsbD, PsbE, PsbF, PsbH, PsbI, PsbJ, PsbK, PsbL, PsbM, PsbT, PsbY, PsbZ, Psb30/Ycf12, at least 3 peripheral proteins of the oxygen-evolving complex and a large number of cofactors. It forms dimeric complexes. The D1/D2 heterodimer binds P680, chlorophylls that are the primary electron donor of PSII, and subsequent electron acceptors. It shares a non-heme iron and each subunit binds pheophytin, quinone, additional chlorophylls, carotenoids and lipids. There is also a Cl(-1) ion associated with D1 and D2, which is required for oxygen evolution. The PSII complex binds additional chlorophylls, carotenoids and specific lipids. serves as cofactor.

Its subcellular location is the plastid. The protein localises to the chloroplast thylakoid membrane. It catalyses the reaction 2 a plastoquinone + 4 hnu + 2 H2O = 2 a plastoquinol + O2. Photosystem II (PSII) is a light-driven water:plastoquinone oxidoreductase that uses light energy to abstract electrons from H(2)O, generating O(2) and a proton gradient subsequently used for ATP formation. It consists of a core antenna complex that captures photons, and an electron transfer chain that converts photonic excitation into a charge separation. The D1/D2 (PsbA/PsbD) reaction center heterodimer binds P680, the primary electron donor of PSII as well as several subsequent electron acceptors. D2 is needed for assembly of a stable PSII complex. The sequence is that of Photosystem II D2 protein from Bigelowiella natans (Pedinomonas minutissima).